Consider the following 125-residue polypeptide: Kappa-casein (125 aa).

Residues 42–63 (LPNIDPPTVERRPRPRPSFIAI) are disordered. An O-linked (GalNAc...) threonine glycan is attached at Thr-97. Ser-104 is modified (phosphoserine; alternate). Residue Ser-104 is glycosylated (O-linked (GalNAc...) serine; alternate). Thr-121 carries O-linked (GalNAc...) threonine glycosylation. Ser-122 carries the post-translational modification Phosphoserine.

It belongs to the kappa-casein family. In terms of tissue distribution, mammary gland specific. Secreted in milk.

It is found in the secreted. Kappa-casein stabilizes micelle formation, preventing casein precipitation in milk. The protein is Kappa-casein (CSN3) of Lama guanicoe (Guanaco).